A 561-amino-acid chain; its full sequence is 7-keto 8-aminopelargonic acid transporter (561 aa).

Residues 1-49 (MNRVGAVFLFVYERNFFLSIVPDRHRTEIRMSSSERSEVKFDKHFNWWS) are Cytoplasmic-facing. A helical transmembrane segment spans residues 50-70 (LLGIAFSLSCSWVGISASMAV). The Extracellular segment spans residues 71 to 77 (GIASGGP). Residues 78–98 (LLIIYGLIIAAFFSLMCGISL) form a helical membrane-spanning segment. Topologically, residues 99–160 (GDFAAILPNS…NVEVSSKFQK (62 aa)) are cytoplasmic. The helical transmembrane segment at 161 to 181 (VSSMVVGLLNYFGAIFTTASI) threads the bilayer. Over 182–204 (CSSLSMSCIGIHKLLHPDYELKH) the chain is Extracellular. The chain crosses the membrane as a helical span at residues 205-225 (WHVFVGYECINAVLTLFNIYS). The Cytoplasmic segment spans residues 226-230 (TPLPY). The chain crosses the membrane as a helical span at residues 231–251 (ISQFGLYTSLLSFAMTFIICI). The Extracellular portion of the chain corresponds to 252-281 (VSRSDNTVDPWPKASNIFGSFDNQTGWNSS). A helical membrane pass occupies residues 282 to 302 (GMAFVVGLVNPIWAFVGIDSA). Over 303-321 (THMIDEVGYSKSRFLVPKV) the chain is Cytoplasmic. Residues 322–342 (IITTIIVGFVTSFIYCVGLFF) traverse the membrane as a helical segment. Residues 343-369 (CITDQTAVVESILPIVEIFYQATGNRN) are Extracellular-facing. Residues 370 to 390 (LSVFLQCMCITTGFVSGIASG) traverse the membrane as a helical segment. Residues 391–439 (TWQSRILQSFGKSYAPFYKEGSLGNKSLKKLAVLTPGFKSPLYAHFLSQ) are Cytoplasmic-facing. A helical membrane pass occupies residues 440–460 (ICVTIIGCIFMGSSTAFNAII). A topological domain (extracellular) is located at residue Thr-461. A helical membrane pass occupies residues 462–482 (ACITLLLMSYAVPSFIFLFVI). Over 483–507 (KKEKFIHRIESDVNCVSRPNRRRMS) the chain is Cytoplasmic. Residues 508–528 (MIPHIICILWTLFCLVFLSFP) traverse the membrane as a helical segment. The Extracellular portion of the chain corresponds to 529 to 540 (YTLPVTAGNMNY). Residues 541 to 560 (TSVVYAVVFCIISIVVFPTC) form a helical membrane-spanning segment. A topological domain (cytoplasmic) is located at residue Ile-561.

The protein belongs to the amino acid-polyamine-organocation (APC) superfamily.

The protein localises to the membrane. Its function is as follows. Transport into the cell of 7-keto 8-aminopelargonic acid. This chain is 7-keto 8-aminopelargonic acid transporter (BIO5), found in Saccharomyces cerevisiae (strain ATCC 204508 / S288c) (Baker's yeast).